The chain runs to 494 residues: DnaJ homolog subfamily C member 7 (494 aa).

Position 2 is an N-acetylalanine (Ala-2). TPR repeat units follow at residues 28-61 (AESF…CPNN), 62-95 (ASYY…DDSF), 96-129 (VRGH…DHKN), 142-175 (VMEY…APAC), 210-243 (ADAL…APDH), 256-289 (LKAK…DPNN), 294-327 (AKLY…DDTY), and 328-361 (IKAY…EKTK). The region spanning 381 to 451 (DYYKILGVDK…KKKTRYDSGQ (71 aa)) is the J domain. Ser-393 is subject to Phosphoserine.

As to quaternary structure, associates with complexes containing chaperones HSP70 and HSP90. Interacts with the GAP domain of NF1. Interacts with HSP90AA1. Interacts with HSPA1A/B; the interaction is enhanced by ATP. Interacts with HSP90AB1. Interacts with PGR. Interacts with RAD9A; the interaction is interrupted by UV and heat shock treatments. Interacts with HUS1 and RAD1. Interacts with NR1I3; this complex may also include HSP90 Interacts with HSPA8. As to expression, widely expressed with high levels in liver, skeletal muscle, kidney and testis.

It localises to the cytoplasm. The protein localises to the nucleus. It is found in the cytoskeleton. Functionally, acts as a co-chaperone regulating the molecular chaperones HSP70 and HSP90 in folding of steroid receptors, such as the glucocorticoid receptor and the progesterone receptor. Proposed to act as a recycling chaperone by facilitating the return of chaperone substrates to early stages of chaperoning if further folding is required. In vitro, induces ATP-independent dissociation of HSP90 but not of HSP70 from the chaperone-substrate complexes. Recruits NR1I3 to the cytoplasm. This chain is DnaJ homolog subfamily C member 7 (Dnajc7), found in Mus musculus (Mouse).